The primary structure comprises 1463 residues: Clustered mitochondria protein homolog (1463 aa).

The segment at 1 to 79 (MAKNKKQNGK…ETEQQQQQQE (79 aa)) is disordered. Residues 10-22 (KAKTPPVVAAAAG) show a composition bias toward low complexity. The 243-residue stretch at 374–616 (RAEDTFSSKL…RTFPPDVNFL (243 aa)) folds into the Clu domain. 3 disordered regions span residues 684-753 (AQKT…SEDA), 942-988 (GDGQ…SVPS), and 1387-1463 (QKEA…RRKS). The segment covering 692 to 702 (KQAAIEAAAPA) has biased composition (low complexity). Residues 703–731 (EGDKTPAKDAKDGKEAGKDANDGKEEGST) show a composition bias toward basic and acidic residues. The span at 955 to 964 (GGKKQNKQSK) shows a compositional bias: basic residues. Over residues 965 to 980 (RGGGGGGGKGAAGGGR) the composition is skewed to gly residues. Residues 1438 to 1456 (AEAASHTAGGAAANTAAPA) are compositionally biased toward low complexity.

This sequence belongs to the CLU family.

The protein resides in the cytoplasm. Functionally, mRNA-binding protein involved in proper cytoplasmic distribution of mitochondria. The protein is Clustered mitochondria protein homolog of Anopheles gambiae (African malaria mosquito).